Consider the following 897-residue polypeptide: Macoilin (897 aa).

4 helical membrane passes run I113 to I133, Q157 to I177, P181 to P201, and L204 to M224. Polar residues-rich tracts occupy residues I291–K304 and G329–P338. The tract at residues I291–Q375 is disordered. Residues D351–D361 are compositionally biased toward acidic residues. The helical transmembrane segment at G379–F399 threads the bilayer. Polar residues predominate over residues T403–Q413. 2 disordered regions span residues T403–D535 and N724–P770. Residues I414–D424 show a composition bias toward acidic residues. Polar residues predominate over residues T432–R451. 2 stretches are compositionally biased toward low complexity: residues S452–G467 and S475–H490. Residues D503–S726 are a coiled coil. The span at T510–D535 shows a compositional bias: basic and acidic residues. Residues E734–Q761 show a composition bias toward polar residues.

As to expression, strong expression in many neurons, very weak expression is also detected in others tissues.

It is found in the rough endoplasmic reticulum membrane. The protein resides in the nucleus membrane. Functionally, plays a role in the regulation of neuronal activity. In AWA and AWC neurons, plays a role in regulating olfactory adaptation by controlling the forgetting sensory responses to odorants such as diacetyl and isoamyl alcohol. May play a role in regulating daf-7 expression in ASI neurons in response to bacterial small RNAs. In ASI neurons, promotes dauer formation in response to pheromones such as the ascarosides ascr#2 and ascr#3. This Caenorhabditis elegans protein is Macoilin.